We begin with the raw amino-acid sequence, 807 residues long: Phenylalanine--tRNA ligase beta subunit (807 aa).

Residues 39 to 153 (SARSQGVVVG…EIPAVGTPVA (115 aa)) enclose the tRNA-binding domain. One can recognise a B5 domain in the interval 407–491 (RTPVPLQLRR…RLVGFDKFGS (85 aa)). 4 residues coordinate Mg(2+): aspartate 469, aspartate 475, glutamate 478, and glutamate 479. The FDX-ACB domain occupies 713-806 (PTVPASERDL…LSKQFKAELR (94 aa)).

It belongs to the phenylalanyl-tRNA synthetase beta subunit family. Type 1 subfamily. In terms of assembly, tetramer of two alpha and two beta subunits. Requires Mg(2+) as cofactor.

Its subcellular location is the cytoplasm. It carries out the reaction tRNA(Phe) + L-phenylalanine + ATP = L-phenylalanyl-tRNA(Phe) + AMP + diphosphate + H(+). This is Phenylalanine--tRNA ligase beta subunit from Synechococcus sp. (strain CC9902).